The chain runs to 155 residues: Ribonuclease H (155 aa).

The region spanning 1–142 (MTKQVEIFTD…CDELARAAAM (142 aa)) is the RNase H type-1 domain. Mg(2+) contacts are provided by aspartate 10, glutamate 48, aspartate 70, and aspartate 134.

The protein belongs to the RNase H family. In terms of assembly, monomer. Mg(2+) serves as cofactor.

The protein resides in the cytoplasm. The catalysed reaction is Endonucleolytic cleavage to 5'-phosphomonoester.. Functionally, endonuclease that specifically degrades the RNA of RNA-DNA hybrids. This is Ribonuclease H from Enterobacter sp. (strain 638).